The sequence spans 156 residues: 6,7-dimethyl-8-ribityllumazine synthase (156 aa).

5-amino-6-(D-ribitylamino)uracil contacts are provided by residues Phe-25, 59–61 (AFE), and 83–85 (AVI). A (2S)-2-hydroxy-3-oxobutyl phosphate-binding site is contributed by 88–89 (AT). The Proton donor role is filled by His-91. Phe-116 serves as a coordination point for 5-amino-6-(D-ribitylamino)uracil. Residue Arg-130 participates in (2S)-2-hydroxy-3-oxobutyl phosphate binding.

The protein belongs to the DMRL synthase family.

The catalysed reaction is (2S)-2-hydroxy-3-oxobutyl phosphate + 5-amino-6-(D-ribitylamino)uracil = 6,7-dimethyl-8-(1-D-ribityl)lumazine + phosphate + 2 H2O + H(+). It participates in cofactor biosynthesis; riboflavin biosynthesis; riboflavin from 2-hydroxy-3-oxobutyl phosphate and 5-amino-6-(D-ribitylamino)uracil: step 1/2. In terms of biological role, catalyzes the formation of 6,7-dimethyl-8-ribityllumazine by condensation of 5-amino-6-(D-ribitylamino)uracil with 3,4-dihydroxy-2-butanone 4-phosphate. This is the penultimate step in the biosynthesis of riboflavin. The polypeptide is 6,7-dimethyl-8-ribityllumazine synthase (Nitratidesulfovibrio vulgaris (strain DSM 19637 / Miyazaki F) (Desulfovibrio vulgaris)).